The sequence spans 611 residues: Alpha-1,2-mannosyltransferase ALG9 (611 aa).

The span at 1–10 shows a compositional bias: basic residues; it reads MASRGARQRL. Positions 1-23 are disordered; the sequence is MASRGARQRLKGSGASSGDTAPA. Topologically, residues 1–135 are lumenal; that stretch reads MASRGARQRL…FHARILQTNK (135 aa). An N-linked (GlcNAc...) asparagine glycan is attached at Asn77. The helical transmembrane segment at 136 to 156 threads the bilayer; sequence ILVFYFLRCLLAFVSCICELY. At 157–171 the chain is on the cytoplasmic side; sequence FYKAVCKKFGLHVSR. Residues 172 to 192 form a helical membrane-spanning segment; that stretch reads MMLAFLVLSTGMFCSSSAFLP. Topologically, residues 193–213 are lumenal; sequence SSFCMYTTLIAMTGWYMDKTS. Residues 214–234 traverse the membrane as a helical segment; that stretch reads IAVLGVAAGAILGWPFSAALG. Residues 235–249 are Cytoplasmic-facing; sequence LPIAFDLLVMKHRWK. The chain crosses the membrane as a helical span at residues 250–270; that stretch reads SFFHWSLMALILFLVPVVVID. At 271–304 the chain is on the lumenal side; sequence SYYYGKLVIAPLNIVLYNVFTPHGPDLYGTEPWY. Residues 305 to 325 traverse the membrane as a helical segment; the sequence is FYLINGFLNFNVAFALALLVL. Over 326–342 the chain is Cytoplasmic; the sequence is PLTSLMEYLLQRFHVQN. Residues 343-363 traverse the membrane as a helical segment; that stretch reads LGHPYWLTLAPMYIWFIIFFI. At 364 to 370 the chain is on the lumenal side; the sequence is QPHKEER. Residues 371-391 traverse the membrane as a helical segment; it reads FLFPVYPLICLCGAVALSALQ. Over 392 to 405 the chain is Cytoplasmic; it reads KCYHFVFQRYRLEH. Residues 406-426 traverse the membrane as a helical segment; that stretch reads YTVTSNWLALGTVFLFGLLSF. The Lumenal portion of the chain corresponds to 427 to 611; it reads SRSVALFRGY…AKQIRKKSGG (185 aa). Asn593 carries an N-linked (GlcNAc...) asparagine glycan.

It belongs to the glycosyltransferase 22 family. As to expression, ubiquitously expressed; with highest levels in heart, liver and pancreas.

The protein localises to the endoplasmic reticulum membrane. The catalysed reaction is an alpha-D-Man-(1-&gt;2)-alpha-D-Man-(1-&gt;2)-alpha-D-Man-(1-&gt;3)-[alpha-D-Man-(1-&gt;3)-alpha-D-Man-(1-&gt;6)]-beta-D-Man-(1-&gt;4)-beta-D-GlcNAc-(1-&gt;4)-alpha-D-GlcNAc-diphospho-di-trans,poly-cis-dolichol + a di-trans,poly-cis-dolichyl beta-D-mannosyl phosphate = an alpha-D-Man-(1-&gt;2)-alpha-D-Man-(1-&gt;2)-alpha-D-Man-(1-&gt;3)-[alpha-D-Man-(1-&gt;2)-alpha-D-Man-(1-&gt;3)-alpha-D-Man-(1-&gt;6)]-beta-D-Man-(1-&gt;4)-beta-D-GlcNAc-(1-&gt;4)-alpha-D-GlcNAc-diphospho-di-trans,poly-cis-dolichol + a di-trans,poly-cis-dolichyl phosphate + H(+). It carries out the reaction an alpha-D-Man-(1-&gt;2)-alpha-D-Man-(1-&gt;2)-alpha-D-Man-(1-&gt;3)-[alpha-D-Man-(1-&gt;2)-alpha-D-Man-(1-&gt;3)-[alpha-D-Man-(1-&gt;6)]-alpha-D-Man-(1-&gt;6)]-beta-D-Man-(1-&gt;4)-beta-D-GlcNAc-(1-&gt;4)-alpha-D-GlcNAc-diphospho-di-trans,poly-cis-dolichol + a di-trans,poly-cis-dolichyl beta-D-mannosyl phosphate = an alpha-D-Man-(1-&gt;2)-alpha-D-Man-(1-&gt;2)-alpha-D-Man-(1-&gt;3)-[alpha-D-Man-(1-&gt;2)-alpha-D-Man-(1-&gt;3)-[alpha-D-Man-(1-&gt;2)-alpha-D-Man-(1-&gt;6)]-alpha-D-Man-(1-&gt;6)]-beta-D-Man-(1-&gt;4)-beta-D-GlcNAc-(1-&gt;4)-alpha-D-GlcNAc-diphospho-di-trans,poly-cis-dolichol + a di-trans,poly-cis-dolichyl phosphate + H(+). It functions in the pathway protein modification; protein glycosylation. In terms of biological role, mannosyltransferase that operates in the biosynthetic pathway of dolichol-linked oligosaccharides, the glycan precursors employed in protein asparagine (N)-glycosylation. The assembly of dolichol-linked oligosaccharides begins on the cytosolic side of the endoplasmic reticulum membrane and finishes in its lumen. The sequential addition of sugars to dolichol pyrophosphate produces dolichol-linked oligosaccharides containing fourteen sugars, including two GlcNAcs, nine mannoses and three glucoses. Once assembled, the oligosaccharide is transferred from the lipid to nascent proteins by oligosaccharyltransferases. In the lumen of the endoplasmic reticulum, catalyzes the addition of the seventh and ninth alpha-1,2-linked mannose residues to Man(6)GlcNAc(2)-PP-dolichol and Man(8)GlcNAc(2)-PP-dolichol respectively. This Homo sapiens (Human) protein is Alpha-1,2-mannosyltransferase ALG9.